The sequence spans 617 residues: Pentatricopeptide repeat-containing protein At4g18520, chloroplastic (617 aa).

The transit peptide at 1-19 (MFSLSLIQPRLRISEIPVT) directs the protein to the chloroplast. 14 PPR repeats span residues 116–146 (VIYFGNNLISSCVRLGDLVYARKVFDSMPEK), 147–181 (NTVTWTAMIDGYLKYGLEDEAFALFEDYVKHGIRF), 183–217 (NERMFVCLLNLCSRRAEFELGRQVHGNMVKVGVGN), 222–247 (SSLVYFYAQCGELTSALRAFDMMEEK), 248–282 (DVISWTAVISACSRKGHGIKAIGMFIGMLNHWFLP), 283–317 (NEFTVCSILKACSEEKALRFGRQVHSLVVKRMIKT), 318–348 (DVFVGTSLMDMYAKCGEISDCRKVFDGMSNR), 349–383 (NTVTWTSIIAAHAREGFGEEAISLFRIMKRRHLIA), 384–418 (NNLTVVSILRACGSVGALLLGKELHAQIIKNSIEK), 419–449 (NVYIGSTLVWLYCKCGESRDAFNVLQQLPSR), 450–484 (DVVSWTAMISGCSSLGHESEALDFLKEMIQEGVEP), 485–519 (NPFTYSSALKACANSESLLIGRSIHSIAKKNHALS), 520–550 (NVFVGSALIHMYAKCGFVSEAFRVFDSMPEK), and 551–585 (NLVSWKAMIMGYARNGFCREALKLMYRMEAEGFEV).

This sequence belongs to the PPR family. PCMP-A subfamily. Interacts with MORF8/RIP1, MORF2/RIP2 and MORF9/RIP9. Expressed specifically in aerial greening tissues, such as cotyledons, rosette leaves, cauline leaves, stems, sepals, stamens, carpels and siliques.

The protein resides in the plastid. It is found in the chloroplast. Functionally, required for proper chloroplast development. Involved in the regulation of plastid gene expression probably through regulation of plastid-encoded polymerase (PEP) dependent chloroplast transcription. Required for RNA editing of several chloroplastic transcripts, especially accD transcripts. Required for processing of the chloroplastic rpoA pre-mRNA. Required for the monocistronic rpoA transcript processing from the rpl23-rpl2-rps19-rpl22-rps3-rpl16-rpl14-rps8-rpl36-rps11-rpoA polycistron. Binds the intergenic sequence of rps11-rpoA for rpoA monocistronic RNA cleavage. The chain is Pentatricopeptide repeat-containing protein At4g18520, chloroplastic (PCMP-A2) from Arabidopsis thaliana (Mouse-ear cress).